The primary structure comprises 508 residues: Photosystem II CP47 reaction center protein (508 aa).

A run of 6 helical transmembrane segments spans residues 21–36 (SVHI…WAGS), 101–115 (IVFS…IWHW), 140–156 (GIHL…FGAF), 203–218 (IAAG…FHLS), 237–252 (VLSS…AFVV), and 457–472 (SFAL…HGSR).

This sequence belongs to the PsbB/PsbC family. PsbB subfamily. As to quaternary structure, PSII is composed of 1 copy each of membrane proteins PsbA, PsbB, PsbC, PsbD, PsbE, PsbF, PsbH, PsbI, PsbJ, PsbK, PsbL, PsbM, PsbT, PsbX, PsbY, PsbZ, Psb30/Ycf12, at least 3 peripheral proteins of the oxygen-evolving complex and a large number of cofactors. It forms dimeric complexes. It depends on Binds multiple chlorophylls. PSII binds additional chlorophylls, carotenoids and specific lipids. as a cofactor.

It is found in the plastid. Its subcellular location is the chloroplast thylakoid membrane. Its function is as follows. One of the components of the core complex of photosystem II (PSII). It binds chlorophyll and helps catalyze the primary light-induced photochemical processes of PSII. PSII is a light-driven water:plastoquinone oxidoreductase, using light energy to abstract electrons from H(2)O, generating O(2) and a proton gradient subsequently used for ATP formation. This chain is Photosystem II CP47 reaction center protein, found in Lobularia maritima (Sweet alyssum).